A 346-amino-acid polypeptide reads, in one-letter code: Biotin synthase (346 aa).

Residues 38–256 enclose the Radical SAM core domain; the sequence is RQVQVSTLLS…IAVARIMMPT (219 aa). 3 residues coordinate [4Fe-4S] cluster: C53, C57, and C60. [2Fe-2S] cluster is bound by residues C97, C128, C188, and R260.

It belongs to the radical SAM superfamily. Biotin synthase family. Homodimer. It depends on [4Fe-4S] cluster as a cofactor. [2Fe-2S] cluster serves as cofactor.

The enzyme catalyses (4R,5S)-dethiobiotin + (sulfur carrier)-SH + 2 reduced [2Fe-2S]-[ferredoxin] + 2 S-adenosyl-L-methionine = (sulfur carrier)-H + biotin + 2 5'-deoxyadenosine + 2 L-methionine + 2 oxidized [2Fe-2S]-[ferredoxin]. The protein operates within cofactor biosynthesis; biotin biosynthesis; biotin from 7,8-diaminononanoate: step 2/2. Its function is as follows. Catalyzes the conversion of dethiobiotin (DTB) to biotin by the insertion of a sulfur atom into dethiobiotin via a radical-based mechanism. The chain is Biotin synthase from Escherichia coli O157:H7.